The sequence spans 70 residues: Sec-independent protein translocase protein TatA (70 aa).

The helical transmembrane segment at 1–21 (MGSFSVWHWLIVLVIVLVLFG) threads the bilayer. The segment at 42–70 (GMADEDQTPPPADANANAKTVDHKADEIK) is disordered. The segment covering 61–70 (TVDHKADEIK) has biased composition (basic and acidic residues).

Belongs to the TatA/E family. As to quaternary structure, the Tat system comprises two distinct complexes: a TatABC complex, containing multiple copies of TatA, TatB and TatC subunits, and a separate TatA complex, containing only TatA subunits. Substrates initially bind to the TatABC complex, which probably triggers association of the separate TatA complex to form the active translocon.

Its subcellular location is the cell inner membrane. Part of the twin-arginine translocation (Tat) system that transports large folded proteins containing a characteristic twin-arginine motif in their signal peptide across membranes. TatA could form the protein-conducting channel of the Tat system. The chain is Sec-independent protein translocase protein TatA from Agrobacterium fabrum (strain C58 / ATCC 33970) (Agrobacterium tumefaciens (strain C58)).